Consider the following 193-residue polypeptide: ATP-dependent Clp protease proteolytic subunit 2 (193 aa).

The active-site Nucleophile is S98. The active site involves H123.

The protein belongs to the peptidase S14 family. In terms of assembly, fourteen ClpP subunits assemble into 2 heptameric rings which stack back to back to give a disk-like structure with a central cavity, resembling the structure of eukaryotic proteasomes.

It localises to the cytoplasm. The catalysed reaction is Hydrolysis of proteins to small peptides in the presence of ATP and magnesium. alpha-casein is the usual test substrate. In the absence of ATP, only oligopeptides shorter than five residues are hydrolyzed (such as succinyl-Leu-Tyr-|-NHMec, and Leu-Tyr-Leu-|-Tyr-Trp, in which cleavage of the -Tyr-|-Leu- and -Tyr-|-Trp bonds also occurs).. Cleaves peptides in various proteins in a process that requires ATP hydrolysis. Has a chymotrypsin-like activity. Plays a major role in the degradation of misfolded proteins. The chain is ATP-dependent Clp protease proteolytic subunit 2 from Bacillus cereus (strain ATCC 10987 / NRS 248).